The following is an 825-amino-acid chain: Zinc finger protein 229 (825 aa).

The tract at residues 1–26 (METLTSRHEKRALHSQASAISQDREE) is disordered. In terms of domain architecture, KRAB spans 34–108 (LSFKDVAVVF…SHKELSSCKI (75 aa)). Residues 291–315 (KLCQYDEFSEGLRHSAHLNRHQRVP) form a C2H2-type 1; degenerate zinc finger. 7 consecutive C2H2-type zinc fingers follow at residues 349–371 (YRCD…QGVH), 377–399 (YKCE…QRVH), 405–427 (YKCS…QRLH), 433–455 (YTCS…QHIH), 461–483 (YSCG…QKTH), 489–511 (YQCD…QRVH), and 517–539 (YKCN…QRLH). A Glycyl lysine isopeptide (Lys-Gly) (interchain with G-Cter in SUMO2) cross-link involves residue lysine 543. 10 C2H2-type zinc fingers span residues 545 to 566 (YKCE…QRVH), 572 to 594 (YKCS…QRVH), 600 to 622 (YVCD…QRVH), 628 to 650 (YKCA…QRVH), 656 to 678 (YRCQ…QRVH), 684 to 706 (YTCD…QRLH), 712 to 734 (YTCC…KRVH), 740 to 762 (YRCH…QRVH), 768 to 790 (YKCE…QRVH), and 796 to 818 (YTCG…QRVH).

This sequence belongs to the krueppel C2H2-type zinc-finger protein family.

It is found in the nucleus. Functionally, may be involved in transcriptional regulation. This is Zinc finger protein 229 from Homo sapiens (Human).